The chain runs to 127 residues: MERISLTIEKNLLKEVDEIINKERISRSEFIRRALEYYVKKYDWLSRIESKIGEITVIYNSKAVEDIVKLESQYKDIVIISLEIPFEGKIIRMIAIKGQRDRIIEFTNKLKGISSVELAQLTTISIE.

The protein belongs to the transcriptional regulatory CopG/NikR family.

This is an uncharacterized protein from Methanocaldococcus jannaschii (strain ATCC 43067 / DSM 2661 / JAL-1 / JCM 10045 / NBRC 100440) (Methanococcus jannaschii).